Reading from the N-terminus, the 144-residue chain is Large ribosomal subunit protein uL13 (144 aa).

It belongs to the universal ribosomal protein uL13 family. Part of the 50S ribosomal subunit.

In terms of biological role, this protein is one of the early assembly proteins of the 50S ribosomal subunit, although it is not seen to bind rRNA by itself. It is important during the early stages of 50S assembly. This is Large ribosomal subunit protein uL13 from Clostridium botulinum (strain ATCC 19397 / Type A).